The sequence spans 420 residues: MDKLIITGGQRLDGDIRISGAKNAALPILAATLLADEPVTVGNLPHLQDVTTLIELLGRMGVHVVIDDRMNVEVNATTIKELTAPYELVKTMRASILVLGPMVAHFGKASVSLPGGCAIGSRPVDIHLRGLEAMGADIEVTNGYVNASVDGRLKGARIVMDVVTVTGTENLMMAAALAEGTTYLENAAREPEVVDLADFINAMGGKISGAGTDTITIEGVERLTGCHHQVIADRIETGTYLIAAAITGGRIKTKDTVPGTLDAVLQKLEEAGAKITTGDDWIELDMQGRRPKAVSLRTAPYPAMPTDMQAQFMALNLVAEGTGTIVETIFENRFMHVQEMNRMGADIEVQGNTAICRGVEQLTGAPVMATDLRASASLVIAALAASGETTVDRIYHIDRGYECIEEKLQSLGAIIRRVPR.

Residue lysine 22–asparagine 23 participates in phosphoenolpyruvate binding. Arginine 93 contacts UDP-N-acetyl-alpha-D-glucosamine. Cysteine 117 (proton donor) is an active-site residue. 2-(S-cysteinyl)pyruvic acid O-phosphothioketal is present on cysteine 117. Positions 307 and 329 each coordinate UDP-N-acetyl-alpha-D-glucosamine.

Belongs to the EPSP synthase family. MurA subfamily.

The protein resides in the cytoplasm. It catalyses the reaction phosphoenolpyruvate + UDP-N-acetyl-alpha-D-glucosamine = UDP-N-acetyl-3-O-(1-carboxyvinyl)-alpha-D-glucosamine + phosphate. It functions in the pathway cell wall biogenesis; peptidoglycan biosynthesis. In terms of biological role, cell wall formation. Adds enolpyruvyl to UDP-N-acetylglucosamine. The protein is UDP-N-acetylglucosamine 1-carboxyvinyltransferase of Alcanivorax borkumensis (strain ATCC 700651 / DSM 11573 / NCIMB 13689 / SK2).